The following is a 225-amino-acid chain: ATP-dependent dethiobiotin synthetase BioD (225 aa).

Residue 13-18 (NVGKTL) participates in ATP binding. Position 17 (T17) interacts with Mg(2+). The active site involves K38. T42 contacts substrate. Residues D55, 116-119 (EGAG), 176-177 (NH), and 205-207 (PWL) each bind ATP. Mg(2+)-binding residues include D55 and E116.

It belongs to the dethiobiotin synthetase family. In terms of assembly, homodimer. Requires Mg(2+) as cofactor.

The protein localises to the cytoplasm. It catalyses the reaction (7R,8S)-7,8-diammoniononanoate + CO2 + ATP = (4R,5S)-dethiobiotin + ADP + phosphate + 3 H(+). Its pathway is cofactor biosynthesis; biotin biosynthesis; biotin from 7,8-diaminononanoate: step 1/2. Its function is as follows. Catalyzes a mechanistically unusual reaction, the ATP-dependent insertion of CO2 between the N7 and N8 nitrogen atoms of 7,8-diaminopelargonic acid (DAPA, also called 7,8-diammoniononanoate) to form a ureido ring. This chain is ATP-dependent dethiobiotin synthetase BioD, found in Baumannia cicadellinicola subsp. Homalodisca coagulata.